We begin with the raw amino-acid sequence, 208 residues long: Protein-L-isoaspartate O-methyltransferase (208 aa).

S59 is an active-site residue.

This sequence belongs to the methyltransferase superfamily. L-isoaspartyl/D-aspartyl protein methyltransferase family. As to quaternary structure, monomer.

It is found in the cytoplasm. It carries out the reaction [protein]-L-isoaspartate + S-adenosyl-L-methionine = [protein]-L-isoaspartate alpha-methyl ester + S-adenosyl-L-homocysteine. Functionally, catalyzes the methyl esterification of L-isoaspartyl residues in peptides and proteins that result from spontaneous decomposition of normal L-aspartyl and L-asparaginyl residues. It plays a role in the repair and/or degradation of damaged proteins. The polypeptide is Protein-L-isoaspartate O-methyltransferase (pcm) (Shigella flexneri).